The chain runs to 103 residues: Large ribosomal subunit protein bL21 (103 aa).

It belongs to the bacterial ribosomal protein bL21 family. As to quaternary structure, part of the 50S ribosomal subunit. Contacts protein L20.

Its function is as follows. This protein binds to 23S rRNA in the presence of protein L20. The sequence is that of Large ribosomal subunit protein bL21 from Desulforapulum autotrophicum (strain ATCC 43914 / DSM 3382 / VKM B-1955 / HRM2) (Desulfobacterium autotrophicum).